Here is a 357-residue protein sequence, read N- to C-terminus: Holliday junction branch migration complex subunit RuvB (357 aa).

Polar residues predominate over residues 1–10 (MAIQSDSLSS). The segment at 1 to 30 (MAIQSDSLSSRPDAPRLVAPAPASPNEESI) is disordered. A large ATPase domain (RuvB-L) region spans residues 5–195 (SDSLSSRPDA…FGIVSRLEFY (191 aa)). ATP-binding positions include leucine 34, arginine 35, glycine 76, lysine 79, threonine 80, threonine 81, 142 to 144 (EDF), arginine 185, tyrosine 195, and arginine 232. Threonine 80 contacts Mg(2+). The small ATPAse domain (RuvB-S) stretch occupies residues 196–266 (NTDDLAHIVT…AANQALAMLE (71 aa)). A head domain (RuvB-H) region spans residues 269–357 (PQGLDLMDRK…QPSSGDLFGA (89 aa)). DNA is bound by residues arginine 305, arginine 324, and arginine 329.

Belongs to the RuvB family. In terms of assembly, homohexamer. Forms an RuvA(8)-RuvB(12)-Holliday junction (HJ) complex. HJ DNA is sandwiched between 2 RuvA tetramers; dsDNA enters through RuvA and exits via RuvB. An RuvB hexamer assembles on each DNA strand where it exits the tetramer. Each RuvB hexamer is contacted by two RuvA subunits (via domain III) on 2 adjacent RuvB subunits; this complex drives branch migration. In the full resolvosome a probable DNA-RuvA(4)-RuvB(12)-RuvC(2) complex forms which resolves the HJ.

It localises to the cytoplasm. It catalyses the reaction ATP + H2O = ADP + phosphate + H(+). Functionally, the RuvA-RuvB-RuvC complex processes Holliday junction (HJ) DNA during genetic recombination and DNA repair, while the RuvA-RuvB complex plays an important role in the rescue of blocked DNA replication forks via replication fork reversal (RFR). RuvA specifically binds to HJ cruciform DNA, conferring on it an open structure. The RuvB hexamer acts as an ATP-dependent pump, pulling dsDNA into and through the RuvAB complex. RuvB forms 2 homohexamers on either side of HJ DNA bound by 1 or 2 RuvA tetramers; 4 subunits per hexamer contact DNA at a time. Coordinated motions by a converter formed by DNA-disengaged RuvB subunits stimulates ATP hydrolysis and nucleotide exchange. Immobilization of the converter enables RuvB to convert the ATP-contained energy into a lever motion, pulling 2 nucleotides of DNA out of the RuvA tetramer per ATP hydrolyzed, thus driving DNA branch migration. The RuvB motors rotate together with the DNA substrate, which together with the progressing nucleotide cycle form the mechanistic basis for DNA recombination by continuous HJ branch migration. Branch migration allows RuvC to scan DNA until it finds its consensus sequence, where it cleaves and resolves cruciform DNA. The polypeptide is Holliday junction branch migration complex subunit RuvB (Bordetella avium (strain 197N)).